The sequence spans 76 residues: Monocarboxylate transporter 1 (76 aa).

The next 3 membrane-spanning stretches (helical) occupy residues 1-18, 28-48, and 53-73; these read LSILAFVDMVARPSMGLA, IQYFFAASVVANGVCHLLAPL, and IGFCVYAGVFGFAFGWLSSVL. D8 is a binding site for H(+). R12 contacts (S)-lactate.

This sequence belongs to the major facilitator superfamily. Monocarboxylate porter (TC 2.A.1.13) family. As to quaternary structure, interacts with BSG; interaction mediates SLC16A1 targeting to the plasma membrane. Interacts with EMB; interaction mediates SLC16A1 targeting to the plasma membrane.

It is found in the cell membrane. Its subcellular location is the basolateral cell membrane. The protein localises to the apical cell membrane. It carries out the reaction (S)-lactate(in) + H(+)(in) = (S)-lactate(out) + H(+)(out). The catalysed reaction is acetate(out) + H(+)(out) = acetate(in) + H(+)(in). It catalyses the reaction acetoacetate(out) + H(+)(out) = acetoacetate(in) + H(+)(in). The enzyme catalyses pyruvate(out) + H(+)(out) = pyruvate(in) + H(+)(in). It carries out the reaction (R)-3-hydroxybutanoate(out) + H(+)(out) = (R)-3-hydroxybutanoate(in) + H(+)(in). The catalysed reaction is 3-methyl-2-oxobutanoate(out) + H(+)(out) = 3-methyl-2-oxobutanoate(in) + H(+)(in). It catalyses the reaction 4-methyl-2-oxopentanoate(out) + H(+)(out) = 4-methyl-2-oxopentanoate(in) + H(+)(in). The enzyme catalyses succinate(in) + 2 H(+)(in) = succinate(out) + 2 H(+)(out). Functionally, bidirectional proton-coupled monocarboxylate transporter. Catalyzes the rapid transport across the plasma membrane of many monocarboxylates such as lactate, pyruvate, acetate and the ketone bodies acetoacetate and beta-hydroxybutyrate, and thus contributes to the maintenance of intracellular pH. The transport direction is determined by the proton motive force and the concentration gradient of the substrate monocarboxylate. MCT1 is a major lactate exporter. Plays a role in cellular responses to a high-fat diet by modulating the cellular levels of lactate and pyruvate that contribute to the regulation of central metabolic pathways and insulin secretion, with concomitant effects on plasma insulin levels and blood glucose homeostasis. Facilitates the protonated monocarboxylate form of succinate export, that its transient protonation upon muscle cell acidification in exercising muscle and ischemic heart. Functions via alternate outward- and inward-open conformation states. Protonation and deprotonation is essential for the conformational transition. The protein is Monocarboxylate transporter 1 (SLC16A1) of Meriones unguiculatus (Mongolian jird).